Consider the following 357-residue polypeptide: Probable nitronate monooxygenase (357 aa).

FMN is bound by residues asparagine 71, glutamine 175, glycine 180, glycine 219, and 238 to 241; that span reads QMGT.

This sequence belongs to the nitronate monooxygenase family. NMO class I subfamily. FMN serves as cofactor.

It carries out the reaction 3 propionate 3-nitronate + 3 O2 + H2O = 3 3-oxopropanoate + 2 nitrate + nitrite + H2O2 + 3 H(+). Functionally, nitronate monooxygenase that uses molecular oxygen to catalyze the oxidative denitrification of alkyl nitronates. Acts on propionate 3-nitronate (P3N), the presumed physiological substrate. Probably functions in the detoxification of P3N, a metabolic poison produced by plants and fungi as a defense mechanism. The chain is Probable nitronate monooxygenase from Staphylococcus haemolyticus (strain JCSC1435).